The primary structure comprises 160 residues: Transcriptional repressor NrdR (160 aa).

A zinc finger lies at 3 to 34 (CPSCQNTDSRVLESRAADGGRSVRRRRECLNC). In terms of domain architecture, ATP-cone spans 49 to 139 (ITVIKRNGNR…VYRQFRGIDD (91 aa)).

This sequence belongs to the NrdR family. The cofactor is Zn(2+).

Functionally, negatively regulates transcription of bacterial ribonucleotide reductase nrd genes and operons by binding to NrdR-boxes. The protein is Transcriptional repressor NrdR of Synechococcus sp. (strain CC9605).